The sequence spans 249 residues: Large ribosomal subunit protein uL22m (249 aa).

Residues Met1 to Gly22 constitute a mitochondrion transit peptide. The tract at residues Ala70–Gln98 is disordered. Over residues Gln72 to Gln98 the composition is skewed to basic and acidic residues.

Belongs to the universal ribosomal protein uL22 family. Component of the mitochondrial large ribosomal subunit (mt-LSU). Mature yeast 74S mitochondrial ribosomes consist of a small (37S) and a large (54S) subunit. The 37S small subunit contains a 15S ribosomal RNA (15S mt-rRNA) and at least 32 different proteins. The 54S large subunit contains a 21S rRNA (21S mt-rRNA) and at least 45 different proteins. uL22m forms the wall of the exit tunnel.

It is found in the mitochondrion. Its function is as follows. Component of the mitochondrial ribosome (mitoribosome), a dedicated translation machinery responsible for the synthesis of mitochondrial genome-encoded proteins, including at least some of the essential transmembrane subunits of the mitochondrial respiratory chain. The mitoribosomes are attached to the mitochondrial inner membrane and translation products are cotranslationally integrated into the membrane. This chain is Large ribosomal subunit protein uL22m (mrpl22), found in Schizosaccharomyces pombe (strain 972 / ATCC 24843) (Fission yeast).